Here is a 205-residue protein sequence, read N- to C-terminus: GTP cyclohydrolase-2 (205 aa).

49–53 (RIHSE) is a binding site for GTP. Cysteine 54, cysteine 65, and cysteine 67 together coordinate Zn(2+). GTP contacts are provided by residues glutamine 70, 92–94 (EGR), and threonine 114. Catalysis depends on aspartate 126, which acts as the Proton acceptor. Residue arginine 128 is the Nucleophile of the active site. Residues threonine 149 and lysine 154 each coordinate GTP.

The protein belongs to the GTP cyclohydrolase II family. Requires Zn(2+) as cofactor.

It carries out the reaction GTP + 4 H2O = 2,5-diamino-6-hydroxy-4-(5-phosphoribosylamino)-pyrimidine + formate + 2 phosphate + 3 H(+). It participates in cofactor biosynthesis; riboflavin biosynthesis; 5-amino-6-(D-ribitylamino)uracil from GTP: step 1/4. In terms of biological role, catalyzes the conversion of GTP to 2,5-diamino-6-ribosylamino-4(3H)-pyrimidinone 5'-phosphate (DARP), formate and pyrophosphate. The sequence is that of GTP cyclohydrolase-2 from Shewanella sediminis (strain HAW-EB3).